The following is a 359-amino-acid chain: Probable tyrosine-protein phosphatase pir-2 (359 aa).

The Tyrosine-protein phosphatase domain maps to 16 to 191 (QPVGNVIPRT…AKDKRDKQVD (176 aa)). The Phosphocysteine intermediate role is filled by Cys131. The span at 184–199 (DKRDKQVDSDSDSSER) shows a compositional bias: basic and acidic residues. Disordered stretches follow at residues 184–211 (DKRD…KHRE), 234–259 (SVSG…PHHW), and 274–328 (PVAN…RNRM). Positions 200–210 (QRKKKNKRKHR) are enriched in basic residues. Polar residues predominate over residues 234–246 (SVSGTDYQNSPNG). The span at 290 to 309 (PQEEEEFEEDFEEIEEETET) shows a compositional bias: acidic residues. The segment covering 319–328 (SKRRARRNRM) has biased composition (basic residues).

It belongs to the protein-tyrosine phosphatase family. Non-receptor class CDC14 subfamily.

It carries out the reaction O-phospho-L-tyrosyl-[protein] + H2O = L-tyrosyl-[protein] + phosphate. This chain is Probable tyrosine-protein phosphatase pir-2, found in Caenorhabditis elegans.